The primary structure comprises 251 residues: Cytochrome c oxidase subunit 2 (251 aa).

A signal peptide spans M1 to N15. Residues D16–N42 are Mitochondrial intermembrane-facing. Residues I43–T64 traverse the membrane as a helical segment. Residues Y65–E82 lie on the Mitochondrial matrix side of the membrane. Residues I83–C107 form a helical membrane-spanning segment. Topologically, residues D108–Q251 are mitochondrial intermembrane. Positions 186, 221, 223, 225, 229, and 232 each coordinate Cu cation. Residue E223 coordinates Mg(2+).

The protein belongs to the cytochrome c oxidase subunit 2 family. As to quaternary structure, component of the cytochrome c oxidase (complex IV, CIV), a multisubunit enzyme composed of a catalytic core of 3 subunits and several supernumerary subunits. The complex exists as a monomer or a dimer and forms supercomplexes (SCs) in the inner mitochondrial membrane with ubiquinol-cytochrome c oxidoreductase (cytochrome b-c1 complex, complex III, CIII). Cu cation serves as cofactor. Post-translationally, the signal sequence of COX2 is processed by IMP1.

Its subcellular location is the mitochondrion inner membrane. It catalyses the reaction 4 Fe(II)-[cytochrome c] + O2 + 8 H(+)(in) = 4 Fe(III)-[cytochrome c] + 2 H2O + 4 H(+)(out). Functionally, component of the cytochrome c oxidase, the last enzyme in the mitochondrial electron transport chain which drives oxidative phosphorylation. The respiratory chain contains 3 multisubunit complexes succinate dehydrogenase (complex II, CII), ubiquinol-cytochrome c oxidoreductase (cytochrome b-c1 complex, complex III, CIII) and cytochrome c oxidase (complex IV, CIV), that cooperate to transfer electrons derived from NADH and succinate to molecular oxygen, creating an electrochemical gradient over the inner membrane that drives transmembrane transport and the ATP synthase. Cytochrome c oxidase is the component of the respiratory chain that catalyzes the reduction of oxygen to water. Electrons originating from reduced cytochrome c in the intermembrane space (IMS) are transferred via the dinuclear copper A center (CU(A)) of subunit 2 and heme A of subunit 1 to the active site in subunit 1, a binuclear center (BNC) formed by heme A3 and copper B (CU(B)). The BNC reduces molecular oxygen to 2 water molecules using 4 electrons from cytochrome c in the IMS and 4 protons from the mitochondrial matrix. The protein is Cytochrome c oxidase subunit 2 (COX2) of Lachancea kluyveri (strain ATCC 58438 / CBS 3082 / BCRC 21498 / NBRC 1685 / JCM 7257 / NCYC 543 / NRRL Y-12651) (Yeast).